Here is a 294-residue protein sequence, read N- to C-terminus: NAD kinase (294 aa).

Catalysis depends on Asp-73, which acts as the Proton acceptor. Residues 73–74 (DG), 147–148 (ND), Arg-175, Asp-177, and 188–193 (TAYALS) contribute to the NAD(+) site.

The protein belongs to the NAD kinase family. A divalent metal cation is required as a cofactor.

It is found in the cytoplasm. It carries out the reaction NAD(+) + ATP = ADP + NADP(+) + H(+). In terms of biological role, involved in the regulation of the intracellular balance of NAD and NADP, and is a key enzyme in the biosynthesis of NADP. Catalyzes specifically the phosphorylation on 2'-hydroxyl of the adenosine moiety of NAD to yield NADP. In Nitrosospira multiformis (strain ATCC 25196 / NCIMB 11849 / C 71), this protein is NAD kinase.